The chain runs to 336 residues: NADH-quinone oxidoreductase subunit H (336 aa).

8 consecutive transmembrane segments (helical) span residues 4-24, 75-95, 108-128, 154-174, 181-201, 233-253, 272-292, and 308-328; these read YILW…LVVA, YLFF…WAVI, LGLL…VIAG, MGFA…TGII, LWHW…IAGI, LFFL…SIMF, FVPG…MFLW, and LGWK…ACMV.

This sequence belongs to the complex I subunit 1 family. NDH-1 is composed of 14 different subunits. Subunits NuoA, H, J, K, L, M, N constitute the membrane sector of the complex.

The protein localises to the cell inner membrane. The catalysed reaction is a quinone + NADH + 5 H(+)(in) = a quinol + NAD(+) + 4 H(+)(out). Functionally, NDH-1 shuttles electrons from NADH, via FMN and iron-sulfur (Fe-S) centers, to quinones in the respiratory chain. The immediate electron acceptor for the enzyme in this species is believed to be ubiquinone. Couples the redox reaction to proton translocation (for every two electrons transferred, four hydrogen ions are translocated across the cytoplasmic membrane), and thus conserves the redox energy in a proton gradient. This subunit may bind ubiquinone. This chain is NADH-quinone oxidoreductase subunit H, found in Francisella philomiragia subsp. philomiragia (strain ATCC 25017 / CCUG 19701 / FSC 153 / O#319-036).